Consider the following 447-residue polypeptide: Rab GDP dissociation inhibitor alpha (447 aa).

Ser-427 carries the post-translational modification Phosphoserine.

Belongs to the Rab GDI family. As to quaternary structure, interacts with RHOH. Interacts with the non-phosphorylated forms of RAB1A, RAB3A, RAB5A, RAB5B, RAB5C, RAB8A, RAB8B, RAB10, RAB12, RAB35, and RAB43. As to expression, high expression in brain, lower in other tissues.

The protein resides in the cytoplasm. It is found in the golgi apparatus. It localises to the trans-Golgi network. Functionally, regulates the GDP/GTP exchange reaction of most Rab proteins by inhibiting the dissociation of GDP from them, and the subsequent binding of GTP to them. Promotes the dissociation of GDP-bound Rab proteins from the membrane and inhibits their activation. Promotes the dissociation of RAB1A, RAB3A, RAB5A and RAB10 from membranes. In Rattus norvegicus (Rat), this protein is Rab GDP dissociation inhibitor alpha (Gdi1).